The following is a 367-amino-acid chain: MQTLKVELGERSYPIHIGEGLLDQPELLTPHIVGRQVAIVSNTTVAPLYLERLTQTLAGYNVLPIVLPDGEAFKNWETLQTIFDGLLTARHDRRTTVIALGGGVIGDMAGFAAACYQRGVNFIQIPTTLLSQVDSSVGGKTGINHPLGKNMVGAFYQPSVVLIDTASLNTLPERELSAGLAEVIKYGLICDEPFLTWLEEHVDALRGLDQAALTVAIERSCAAKALVVGADERESGVRATLNLGHTFGHAIETHMGYGVWLHGEAVAAGTVMALEMSSRLGWISTQERDRGIRLFQRAGLPVVPPQDMTQDNFLEHMAIDKKVIDGRLRLVLLRRMGEAVITDEYPKEVLQATLVADYRALVDQLRG.

NAD(+) is bound by residues 69–74 (DGEAFK), 103–107 (GVIGD), 127–128 (TT), lysine 140, and lysine 149. Residues glutamate 182, histidine 245, and histidine 262 each coordinate Zn(2+).

The protein belongs to the sugar phosphate cyclases superfamily. Dehydroquinate synthase family. It depends on Co(2+) as a cofactor. Zn(2+) is required as a cofactor. NAD(+) serves as cofactor.

The protein localises to the cytoplasm. It catalyses the reaction 7-phospho-2-dehydro-3-deoxy-D-arabino-heptonate = 3-dehydroquinate + phosphate. Its pathway is metabolic intermediate biosynthesis; chorismate biosynthesis; chorismate from D-erythrose 4-phosphate and phosphoenolpyruvate: step 2/7. In terms of biological role, catalyzes the conversion of 3-deoxy-D-arabino-heptulosonate 7-phosphate (DAHP) to dehydroquinate (DHQ). In Pseudomonas syringae pv. syringae (strain B728a), this protein is 3-dehydroquinate synthase.